We begin with the raw amino-acid sequence, 257 residues long: 4-hydroxy-tetrahydrodipicolinate reductase (257 aa).

NAD(+)-binding positions include 11–16 and E37; that span reads GANGRM. R38 lines the NADP(+) pocket. Residues 86–88 and 110–113 contribute to the NAD(+) site; these read GST and SGNY. H144 serves as the catalytic Proton donor/acceptor. H145 contacts (S)-2,3,4,5-tetrahydrodipicolinate. K148 acts as the Proton donor in catalysis. 154–155 lines the (S)-2,3,4,5-tetrahydrodipicolinate pocket; it reads GT.

Belongs to the DapB family.

The protein localises to the cytoplasm. It carries out the reaction (S)-2,3,4,5-tetrahydrodipicolinate + NAD(+) + H2O = (2S,4S)-4-hydroxy-2,3,4,5-tetrahydrodipicolinate + NADH + H(+). The enzyme catalyses (S)-2,3,4,5-tetrahydrodipicolinate + NADP(+) + H2O = (2S,4S)-4-hydroxy-2,3,4,5-tetrahydrodipicolinate + NADPH + H(+). It participates in amino-acid biosynthesis; L-lysine biosynthesis via DAP pathway; (S)-tetrahydrodipicolinate from L-aspartate: step 4/4. Functionally, catalyzes the conversion of 4-hydroxy-tetrahydrodipicolinate (HTPA) to tetrahydrodipicolinate. The protein is 4-hydroxy-tetrahydrodipicolinate reductase of Caulobacter vibrioides (strain ATCC 19089 / CIP 103742 / CB 15) (Caulobacter crescentus).